Reading from the N-terminus, the 507-residue chain is Cytochrome P450 52A7 (507 aa).

A helical membrane pass occupies residues 6–26; the sequence is LHYWYYVLPAFIIFHWIVSAI. C456 provides a ligand contact to heme.

This sequence belongs to the cytochrome P450 family. The cofactor is heme.

It localises to the membrane. Together with an NADPH cytochrome P450 the enzyme system catalyzes the terminal hydroxylation as the first step in the assimilation of alkanes and fatty acids. Preferentially hydroxylates lauric acid. The protein is Cytochrome P450 52A7 (CYP52A7) of Candida tropicalis (Yeast).